Here is a 484-residue protein sequence, read N- to C-terminus: MAPPKAASHRPAVRRKKSGTLVDSILDKYLNVRFFKYLLLEPAALPIVGLFVLLAELVINVVVIQRVPYTEIDWVAYMQECEGFLNGTTNYSLLRGDTGPLVYPAAFVYIYSALYYVTSHGTNVRLAQYIFAGIYLLQLALVLRLYSKSRKVPPYVLVLSAFTSYRIHSIYVLRLFNDPVAVLLLYAALNLFLDRRWTLGSTFFSLAVGVKMNILLFAPALLLFYLANLGLLRTILQLAVCGVIQLLLGAPFLLTHPVEYLRGSFDLGRIFEHKWTVNYRFLSRDVFENRTFHVSLLGLHLLLLLAFAKPTWTFFQSYVRLRRIEDQLQPQIAQQNLELKAQKRPKKVEKDKDKDQKKFTTEQQSFLKAFEKSLQKASGGKATPAPAQAEPERYGIHFDRCTQLALLPFFLCNLVGVACSRSLHYQFYVWYFHSLPYLAWSTPYSLGVRCLILGLIEYCWNTYPSTNFSSAALHFTHIIPPYQL.

Residues 1-43 (MAPPKAASHRPAVRRKKSGTLVDSILDKYLNVRFFKYLLLEPA) are Cytoplasmic-facing. The helical transmembrane segment at 44-64 (ALPIVGLFVLLAELVINVVVI) threads the bilayer. Topologically, residues 65-97 (QRVPYTEIDWVAYMQECEGFLNGTTNYSLLRGD) are lumenal. Residues 98 to 118 (TGPLVYPAAFVYIYSALYYVT) form a helical membrane-spanning segment. Residues 119-125 (SHGTNVR) lie on the Cytoplasmic side of the membrane. Residues 126 to 146 (LAQYIFAGIYLLQLALVLRLY) traverse the membrane as a helical segment. Topologically, residues 147-171 (SKSRKVPPYVLVLSAFTSYRIHSIY) are lumenal. A helical transmembrane segment spans residues 172–192 (VLRLFNDPVAVLLLYAALNLF). Topologically, residues 193–211 (LDRRWTLGSTFFSLAVGVK) are cytoplasmic. The chain crosses the membrane as a helical span at residues 212-232 (MNILLFAPALLLFYLANLGLL). A topological domain (lumenal) is located at residue arginine 233. The chain crosses the membrane as a helical span at residues 234-254 (TILQLAVCGVIQLLLGAPFLL). At 255 to 294 (THPVEYLRGSFDLGRIFEHKWTVNYRFLSRDVFENRTFHV) the chain is on the cytoplasmic side. The helical transmembrane segment at 295-315 (SLLGLHLLLLLAFAKPTWTFF) threads the bilayer. Residues 316 to 403 (QSYVRLRRIE…YGIHFDRCTQ (88 aa)) are Lumenal-facing. A helical membrane pass occupies residues 404 to 424 (LALLPFFLCNLVGVACSRSLH). At 425 to 426 (YQ) the chain is on the cytoplasmic side. The helical transmembrane segment at 427 to 447 (FYVWYFHSLPYLAWSTPYSLG) threads the bilayer. The Lumenal segment spans residues 448–484 (VRCLILGLIEYCWNTYPSTNFSSAALHFTHIIPPYQL).

This sequence belongs to the glycosyltransferase ALG3 family.

It is found in the endoplasmic reticulum membrane. The catalysed reaction is an alpha-D-Man-(1-&gt;2)-alpha-D-Man-(1-&gt;2)-alpha-D-Man-(1-&gt;3)-[alpha-D-Man-(1-&gt;6)]-beta-D-Man-(1-&gt;4)-beta-D-GlcNAc-(1-&gt;4)-alpha-D-GlcNAc-diphospho-di-trans,poly-cis-dolichol + a di-trans,poly-cis-dolichyl beta-D-mannosyl phosphate = an alpha-D-Man-(1-&gt;2)-alpha-D-Man-(1-&gt;2)-alpha-D-Man-(1-&gt;3)-[alpha-D-Man-(1-&gt;3)-alpha-D-Man-(1-&gt;6)]-beta-D-Man-(1-&gt;4)-beta-D-GlcNAc-(1-&gt;4)-alpha-D-GlcNAc-diphospho-di-trans,poly-cis-dolichol + a di-trans,poly-cis-dolichyl phosphate + H(+). It functions in the pathway protein modification; protein glycosylation. In terms of biological role, probable alpha-1,3-mannosyltransferase involved in the N-glycosylation pathway. Involved in glycosylation of the TNF receptor grnd, regulating its ligand affinity. Required for normal epithelial growth and architecture. Suppressor of JNK-dependent intestinal stem cell proliferation. The chain is Dolichyl-P-Man:Man5GlcNAc2-PP-dolichol alpha-1,3-mannosyltransferase l(2)not2 from Drosophila melanogaster (Fruit fly).